The following is a 145-amino-acid chain: Large ribosomal subunit protein uL11 (145 aa).

It belongs to the universal ribosomal protein uL11 family. As to quaternary structure, part of the ribosomal stalk of the 50S ribosomal subunit. Interacts with L10 and the large rRNA to form the base of the stalk. L10 forms an elongated spine to which L12 dimers bind in a sequential fashion forming a multimeric L10(L12)X complex. Post-translationally, one or more lysine residues are methylated.

Forms part of the ribosomal stalk which helps the ribosome interact with GTP-bound translation factors. The chain is Large ribosomal subunit protein uL11 from Coxiella burnetii (strain Dugway 5J108-111).